A 185-amino-acid chain; its full sequence is Large ribosomal subunit protein uL5 (185 aa).

Belongs to the universal ribosomal protein uL5 family. As to quaternary structure, part of the 50S ribosomal subunit; part of the 5S rRNA/L5/L18/L25 subcomplex. Contacts the 5S rRNA and the P site tRNA. Forms a bridge to the 30S subunit in the 70S ribosome.

In terms of biological role, this is one of the proteins that bind and probably mediate the attachment of the 5S RNA into the large ribosomal subunit, where it forms part of the central protuberance. In the 70S ribosome it contacts protein S13 of the 30S subunit (bridge B1b), connecting the 2 subunits; this bridge is implicated in subunit movement. Contacts the P site tRNA; the 5S rRNA and some of its associated proteins might help stabilize positioning of ribosome-bound tRNAs. The sequence is that of Large ribosomal subunit protein uL5 from Bradyrhizobium sp. (strain ORS 278).